The sequence spans 331 residues: Tryptophan--tRNA ligase (331 aa).

Residues 10–12 (QPS) and 18–19 (GN) each bind ATP. The 'HIGH' region motif lies at 11–19 (PSGQLTLGN). Asp-133 is a binding site for L-tryptophan. ATP is bound by residues 145–147 (GED), Val-184, and 193–197 (KMSKS). Positions 193–197 (KMSKS) match the 'KMSKS' region motif.

It belongs to the class-I aminoacyl-tRNA synthetase family. In terms of assembly, homodimer.

The protein resides in the cytoplasm. It carries out the reaction tRNA(Trp) + L-tryptophan + ATP = L-tryptophyl-tRNA(Trp) + AMP + diphosphate + H(+). Its function is as follows. Catalyzes the attachment of tryptophan to tRNA(Trp). This is Tryptophan--tRNA ligase from Listeria innocua serovar 6a (strain ATCC BAA-680 / CLIP 11262).